The following is a 482-amino-acid chain: [Fructose-bisphosphate aldolase]-lysine N-methyltransferase, chloroplastic (482 aa).

The transit peptide at 1–57 (MSASVAVVSGFLRIPSIQKSQNPSFLFSRPKKSLVRPISASSSELPENVRNFWKWLR) directs the protein to the chloroplast. One can recognise an SET domain in the interval 59–282 (QGVVSGKSVA…AGEQVYIQYD (224 aa)). S-adenosyl-L-methionine is bound by residues 75 to 77 (EGL) and arginine 217. Arginine 217, arginine 221, and aspartate 234 together coordinate substrate. An S-adenosyl-L-methionine-binding site is contributed by 237–238 (NH). Substrate contacts are provided by tyrosine 249, tyrosine 281, and tyrosine 294.

Belongs to the class V-like SAM-binding methyltransferase superfamily. Plant protein-lysine LSMT methyltransferase family.

Its subcellular location is the plastid. The protein resides in the chloroplast stroma. It catalyses the reaction [fructose-bisphosphate aldolase]-L-lysine + 3 S-adenosyl-L-methionine = [fructose-bisphosphate aldolase]-N(6),N(6),N(6)-trimethyl-L-lysine + 3 S-adenosyl-L-homocysteine + 3 H(+). Functionally, protein-lysine methyltransferase methylating chloroplastic fructose 1,6-bisphosphate aldolases. Can also use with low efficiency gamma-tocopherol methyltransferase as substrate, but not a cytosolic aldolase. Able to interact with unmethylated Rubisco, but unlike in pea, the complex is catalytically unproductive. This chain is [Fructose-bisphosphate aldolase]-lysine N-methyltransferase, chloroplastic (LSMT-L), found in Arabidopsis thaliana (Mouse-ear cress).